The chain runs to 505 residues: Midnolin (505 aa).

The Ubiquitin-like domain maps to 32 to 106; that stretch reads MSLAIHSTTG…LTLVPTVEAG (75 aa). Disordered stretches follow at residues 155-176, 228-305, and 440-485; these read PWHR…VSDF, SIAT…SRKP, and RLRR…GLDF. Residues 238 to 262 are compositionally biased toward low complexity; that stretch reads RPVSSAARVPPVSSSPSSPVSPSPV. The span at 263–282 shows a compositional bias: polar residues; the sequence is TAGTFQSHAASTTCPEQTDC. Over residues 283 to 300 the composition is skewed to low complexity; that stretch reads SPPASSNTTSTPGSSPTP.

Interacts with GCK; the interaction occurs preferentially at low glucose levels. Interacts with the proteasome.

It localises to the nucleus. The protein resides in the cytoplasm. The protein localises to the cytosol. Its subcellular location is the nucleolus. Functionally, facilitates the ubiquitin-independent proteasomal degradation of stimulus-induced transcription factors such as FOSB, EGR1, NR4A1, and IRF4 to the proteasome for degradation. Promotes also the degradation of other substrates such as CBX4. Plays a role in inhibiting the activity of glucokinase GCK and both glucose-induced and basal insulin secretion. This chain is Midnolin, found in Rattus norvegicus (Rat).